Consider the following 87-residue polypeptide: Small ribosomal subunit protein uS15c (87 aa).

This sequence belongs to the universal ribosomal protein uS15 family. In terms of assembly, part of the 30S ribosomal subunit.

Its subcellular location is the plastid. It localises to the chloroplast. The protein is Small ribosomal subunit protein uS15c (rps15) of Amborella trichopoda.